The sequence spans 275 residues: Putative ribonuclease-like protein YfkH (275 aa).

The next 6 membrane-spanning stretches (helical) occupy residues 23-43 (LAYFFLLSLFPFLIFMLTLTA), 83-103 (LLSFGIIAALWSASNGMNAIV), 126-146 (IFLTIAMVFTILVALLLPVFG), 172-192 (WGVSPLVLLIVFSALYVIAPN), 199-219 (FVMPGAVFATIGWIIVSTLFS), and 235-255 (IGGIIVLMIWFYLSGILIILG).

It localises to the cell membrane. This Bacillus subtilis (strain 168) protein is Putative ribonuclease-like protein YfkH (yfkH).